A 699-amino-acid polypeptide reads, in one-letter code: Elongation factor G (699 aa).

Residues 10 to 292 form the tr-type G domain; sequence DRTRNIGIMA…AVIDYLPSPT (283 aa). GTP contacts are provided by residues 19–26, 90–94, and 144–147; these read AHIDAGKT, DTPGH, and NKMD.

This sequence belongs to the TRAFAC class translation factor GTPase superfamily. Classic translation factor GTPase family. EF-G/EF-2 subfamily.

The protein resides in the cytoplasm. Catalyzes the GTP-dependent ribosomal translocation step during translation elongation. During this step, the ribosome changes from the pre-translocational (PRE) to the post-translocational (POST) state as the newly formed A-site-bound peptidyl-tRNA and P-site-bound deacylated tRNA move to the P and E sites, respectively. Catalyzes the coordinated movement of the two tRNA molecules, the mRNA and conformational changes in the ribosome. The protein is Elongation factor G of Coxiella burnetii (strain Dugway 5J108-111).